The following is a 424-amino-acid chain: UDP-sugar transporter protein SLC35A5 (424 aa).

Over 1–8 the chain is Cytoplasmic; it reads MEKQCCSH. Residues 9-29 form a helical membrane-spanning segment; that stretch reads PVICSLSTMYTFLLGAIFIAL. The Lumenal portion of the chain corresponds to 30–53; the sequence is SSSRILLVKYSANEENKYDYLPTT. Residues 54–74 traverse the membrane as a helical segment; the sequence is ANVCSELVKLVFCVLVSFCVI. Over 75–93 the chain is Cytoplasmic; that stretch reads KKDHQSRNLKYASWKEFSN. The helical transmembrane segment at 94–116 threads the bilayer; the sequence is FMKWSIPAFLYFLDNLIVFYVLS. The Lumenal segment spans residues 117–119; the sequence is YLQ. The helical transmembrane segment at 120-142 threads the bilayer; the sequence is PAMAVIFSNFSIITTALLFRIVL. The Cytoplasmic segment spans residues 143-147; the sequence is KRRLN. A helical membrane pass occupies residues 148-168; that stretch reads WIQWASLLILFLSIVALTAGT. At 169–228 the chain is on the lumenal side; sequence KTLQHNLAGHGFHHDAFFSPSNSCLLFRSECPRKDNCTAKEWTFPEAKWNTTARVFSHIR. Asparagine 204 is a glycosylation site (N-linked (GlcNAc...) asparagine). A helical transmembrane segment spans residues 229 to 249; that stretch reads LGMGHVLIIVQCFISSMANIY. Residues 250–263 lie on the Cytoplasmic side of the membrane; the sequence is NEKILKEGNQLAES. A helical transmembrane segment spans residues 264 to 284; it reads IFIQNSKLYFFGILFNGLTLG. Over 285–303 the chain is Lumenal; the sequence is LQRSNRDQIKNCGFFYGHN. A helical membrane pass occupies residues 304–324; the sequence is AFSVALIFVTAFQGLSVAFIL. Residues 325 to 330 lie on the Cytoplasmic side of the membrane; that stretch reads KFLDNM. The chain crosses the membrane as a helical span at residues 331–351; sequence FHVLMAQVTTVIITTVSVLVF. At 352 to 354 the chain is on the lumenal side; it reads DFR. A helical membrane pass occupies residues 355–375; it reads PSLEFFLEAPSVLLSIFIYNA. Topologically, residues 376–424 are cytoplasmic; that stretch reads SKPQGPEYAPRQERIRDLSGNLWERSSGDGEELERLTKPKSDESDEDTF. 3 positions are modified to phosphoserine: serine 394, serine 416, and serine 419. Residues 395–424 are disordered; the sequence is GNLWERSSGDGEELERLTKPKSDESDEDTF. The span at 408–417 shows a compositional bias: basic and acidic residues; it reads LERLTKPKSD.

Belongs to the nucleotide-sugar transporter family. SLC35A subfamily. In terms of assembly, probably forms homooligomers and heterooligomers with SLC35A1, SLC35A2, SLC35A3 and SLC35A4.

The protein localises to the golgi apparatus membrane. It carries out the reaction UMP(out) + UDP-alpha-D-glucuronate(in) = UMP(in) + UDP-alpha-D-glucuronate(out). The enzyme catalyses UMP(out) + UDP-N-acetyl-alpha-D-glucosamine(in) = UMP(in) + UDP-N-acetyl-alpha-D-glucosamine(out). It catalyses the reaction UDP-N-acetyl-alpha-D-galactosamine(in) + UMP(out) = UDP-N-acetyl-alpha-D-galactosamine(out) + UMP(in). Functionally, probable UDP-sugar:UMP transmembrane antiporter involved in UDP-alpha-D-glucuronate/UDP-GlcA, UDP-GlcNAc/UDP-N-acetyl-alpha-D-glucosamine and UDP-N-acetyl-alpha-D-galactosamine/UDP-GalNAc transport from the cytosol to the lumen of the Golgi. The protein is UDP-sugar transporter protein SLC35A5 of Pongo abelii (Sumatran orangutan).